A 242-amino-acid polypeptide reads, in one-letter code: MSKTDNIYSKRRAQIDGFSFDEQVVQVFPDMIKRSVPGYETIINSIGTITERCAVENSNLYDLGCSLGAATLSMRRGLNKAGCQIIAVDNSQQMVERCEQYIHAYKSDTPVQVLCDDICNIHIENASVVILNFTLQFLTPEKRLNLLTNIYNGLLPGGVLVLSEKFVFEDPLNHQLLNDLHLDFKRSQGYSELEISQKRASLDNVLIADTVEQHYLRLRKAGFKHNNLWYQYFNFGSIISIK.

Residues Tyr-39, 64 to 66 (GCS), 89 to 90 (DN), 117 to 118 (DI), Asn-132, and Arg-199 each bind S-adenosyl-L-methionine.

Belongs to the class I-like SAM-binding methyltransferase superfamily. Cx-SAM synthase family. In terms of assembly, homodimer.

The enzyme catalyses prephenate + S-adenosyl-L-methionine = carboxy-S-adenosyl-L-methionine + 3-phenylpyruvate + H2O. Functionally, catalyzes the conversion of S-adenosyl-L-methionine (SAM) to carboxy-S-adenosyl-L-methionine (Cx-SAM). The protein is Carboxy-S-adenosyl-L-methionine synthase of Psychromonas ingrahamii (strain DSM 17664 / CCUG 51855 / 37).